The chain runs to 1467 residues: Chromatin modification-related protein eaf1 (1467 aa).

Disordered stretches follow at residues 154 to 314 (PALA…QLEA), 329 to 402 (GDVT…SQVG), and 469 to 522 (PADM…EKDD). Polar residues-rich tracts occupy residues 155-174 (ALAT…TPAQ), 244-263 (SEDQ…NNTP), 330-339 (DVTTASSLSN), and 388-401 (PPAQ…QSQV). The span at 475-484 (APASASPESA) shows a compositional bias: low complexity. An HSA domain is found at 607-686 (LKRSVEPPRQ…EKKEAHASSM (80 aa)). One can recognise a Myb-like domain in the interval 877–935 (QSSQWTYAEDDELRRLVKEYSYNWSLISSCLTPSSQFTSGAERRTPWECFERWVGLEGL). Positions 970-979 (QQQQQQQQQQ) are enriched in low complexity. Disordered regions lie at residues 970-1058 (QQQQ…PAEF), 1113-1202 (GIPH…TSPD), 1216-1307 (QQRI…MGQP), and 1377-1467 (DGNF…IPSG). Positions 1162 to 1174 (GGPPMNGPIPPNP) are enriched in pro residues. Low complexity-rich tracts occupy residues 1175-1186 (MAMKMMPQTGMP), 1216-1226 (QQRILQSRQQQ), and 1233-1253 (QQPQ…FGPQ). Polar residues-rich tracts occupy residues 1254-1271 (GSHS…TPNN) and 1428-1445 (LPQQ…SGSA). The segment covering 1457 to 1467 (PHPPQAQIPSG) has biased composition (pro residues).

It belongs to the EAF1 family. Component of the NuA4 histone acetyltransferase complex.

It is found in the nucleus. In terms of biological role, component of the NuA4 histone acetyltransferase complex which is involved in transcriptional activation of selected genes principally by acetylation of nucleosomal histone H4 and H2A. The NuA4 complex is also involved in DNA repair. The polypeptide is Chromatin modification-related protein eaf1 (eaf1) (Aspergillus fumigatus (strain ATCC MYA-4609 / CBS 101355 / FGSC A1100 / Af293) (Neosartorya fumigata)).